Consider the following 358-residue polypeptide: Hydroxyproline O-arabinosyltransferase 2 (358 aa).

The helical; Signal-anchor transmembrane segment at 7-26 (YFFPILMTLSLFLIIRYNYI) threads the bilayer.

As to expression, ubiquitous.

The protein resides in the golgi apparatus. It localises to the cis-Golgi network membrane. The enzyme catalyses trans-4-hydroxy-L-prolyl-[protein] + UDP-beta-L-arabinofuranose = O-(beta-L-arabinofuranosyl)-trans-4-hydroxy-L-prolyl-[protein] + UDP + H(+). Functionally, glycosyltransferase involved in the O-arabinosylation of several proteins including extensins and small signaling peptides. Catalyzes the transfer of the initial L-arabinose to the hydroxyl group of Hyp residues. Contributes redundantly with HPAT1 and HPAT3 to arabinosylation of EXT3. This Arabidopsis thaliana (Mouse-ear cress) protein is Hydroxyproline O-arabinosyltransferase 2.